A 1247-amino-acid chain; its full sequence is Structural polyprotein (1247 aa).

The segment at 52–103 (ALRTVPQKPRRTRKTKKQKQVKQEQQSTRNQKKKAPKQKQTQKKKRPGRRER) is disordered. Composition is skewed to basic residues over residues 59-71 (KPRR…KQKQ) and 81-100 (NQKK…RPGR). Residues 86-99 (APKQKQTQKKKRPG) are ribosome-binding. Residues Cys112 and Cys127 are joined by a disulfide bond. A Peptidase S3 domain is found at 112 to 260 (CIFEVKHEGK…KITPEGSVEW (149 aa)). His138 serves as the catalytic Charge relay system. The tract at residues 154 to 159 (KRSSKY) is interaction with spike glycoprotein E2. Active-site charge relay system residues include Asp160 and Ser212. A functions as an uncleaved signal peptide for the precursor of protein E3/E2 region spans residues 261 to 273 (SLALPVMCLLANT). 9 disulfide bridges follow: Cys268–Cys277, Cys282–Cys286, Cys285–Cys317, Cys343–Cys449, Cys346–Cys352, Cys415–Cys429, Cys477–Cys590, Cys525–Cys549, and Cys527–Cys544. Residue Asn272 is glycosylated (N-linked (GlcNAc...) asparagine; by host). The Extracellular segment spans residues 325 to 691 (NARENFNVYK…YYYELYPTTT (367 aa)). Asn587 carries N-linked (GlcNAc...) asparagine; by host glycosylation. Residues 692–712 (IAVLAAASIVVASLVSLSLGM) traverse the membrane as a helical segment. Topologically, residues 713–747 (CICARRRCITPYELTPGATIPFLLGVLCCVKTAKA) are cytoplasmic. Residues 715–719 (CARRR) form an interaction with the capsid protein region. S-palmitoyl cysteine; by host attachment occurs at residues Cys720, Cys740, and Cys741. Residues 720–740 (CITPYELTPGATIPFLLGVLC) form a transient transmembrane before p62-6K protein processing region. A disulfide bridge links Cys720 with Cys741. At 748 to 762 (ASYYEAATYLWNEQQ) the chain is on the extracellular side. Residues 763 to 783 (PLFWLQLLIPLSAAIVACNCL) traverse the membrane as a helical segment. The Cytoplasmic portion of the chain corresponds to 784-787 (KLLP). Residues 788–808 (CCCKTLTFLAVMSIGARTVSA) traverse the membrane as a helical segment. The Extracellular segment spans residues 809-1223 (YEHATVIPNT…AMSWVQKITG (415 aa)). Cystine bridges form between Cys857-Cys922, Cys870-Cys902, Cys871-Cys904, and Cys876-Cys886. An E1 fusion peptide loop region spans residues 892–909 (VYPFMWGGAYCFCDAENT). N-linked (GlcNAc...) asparagine; by host glycosylation is found at Asn949 and Asn1078. Cystine bridges form between Cys1067–Cys1079, Cys1109–Cys1184, Cys1114–Cys1188, and Cys1136–Cys1178. The chain crosses the membrane as a helical span at residues 1224-1244 (GVGLVVAIAALILIIVLCVSF). Cys1241 is lipidated: S-palmitoyl cysteine; by host. Residues 1245-1247 (SRH) are Cytoplasmic-facing.

As to quaternary structure, homodimer. Homomultimer. Interacts with host karyopherin KPNA4; this interaction allows the nuclear import of the viral capsid protein. Interacts with spike glycoprotein E2. Interacts with host IRAK1; the interaction leads to inhibition of IRAK1-dependent signaling. The precursor of protein E3/E2 and E1 form a heterodimer shortly after synthesis. In terms of assembly, the precursor of protein E3/E2 and E1 form a heterodimer shortly after synthesis. Processing of the precursor of protein E3/E2 into E2 and E3 results in a heterodimer of the spike glycoproteins E2 and E1. Spike at virion surface are constituted of three E2-E1 heterodimers. After target cell attachment and endocytosis, E1 change conformation to form homotrimers. Interacts with 6K protein. As to quaternary structure, interacts with spike glycoprotein E1. Processing of the precursor of protein E3/E2 into E2 and E3 results in a heterodimer of the spike glycoproteins E2 and E1. Spike at virion surface are constituted of a trimer of E2-E1 heterodimers. Interacts with 6K protein. Interacts with host MXRA8; this interaction mediates virus entry. Oligomer. Interacts with spike glycoprotein E1. Interacts with spike glycoprotein E2. Structural polyprotein: Specific enzymatic cleavages in vivo yield mature proteins. Capsid protein is auto-cleaved during polyprotein translation, unmasking a signal peptide at the N-terminus of the precursor of E3/E2. The remaining polyprotein is then targeted to the host endoplasmic reticulum, where host signal peptidase cleaves it into pE2, 6K and E1 proteins. pE2 is further processed to mature E3 and E2 by host furin in trans-Golgi vesicle. Post-translationally, palmitoylated via thioester bonds. These palmitoylations may induce disruption of the C-terminus transmembrane. This would result in the reorientation of E2 C-terminus from lumenal to cytoplasmic side. In terms of processing, N-glycosylated. Palmitoylated via thioester bonds.

It localises to the virion. It is found in the host cytoplasm. The protein resides in the host cell membrane. Its subcellular location is the virion membrane. The protein localises to the host Golgi apparatus. It localises to the host trans-Golgi network. It is found in the host endoplasmic reticulum. The catalysed reaction is Autocatalytic release of the core protein from the N-terminus of the togavirus structural polyprotein by hydrolysis of a -Trp-|-Ser- bond.. In terms of biological role, possesses a protease activity that results in its autocatalytic cleavage from the nascent structural protein. Following its self-cleavage, the capsid protein transiently associates with ribosomes, and within several minutes the protein binds to viral RNA and rapidly assembles into icosahedric core particles. The resulting nucleocapsid eventually associates with the cytoplasmic domain of the spike glycoprotein E2 at the cell membrane, leading to budding and formation of mature virions. In case of infection, new virions attach to target cells and after clathrin-mediated endocytosis their membrane fuses with the host endosomal membrane. This leads to the release of the nucleocapsid into the cytoplasm, followed by an uncoating event necessary for the genomic RNA to become accessible. The uncoating might be triggered by the interaction of capsid proteins with ribosomes. Binding of ribosomes would release the genomic RNA since the same region is genomic RNA-binding and ribosome-binding. Its function is as follows. Provides the signal sequence for the translocation of the precursor of protein E3/E2 to the host endoplasmic reticulum. Mediates pH protection of spike glycoprotein E1 during the transport via the secretory pathway. Functionally, plays a role in viral attachment to target host cell, by binding to the cell receptor MXRA8. Synthesized as a p62 precursor which is processed by furin at the cell membrane just before virion budding, giving rise to E2-E1 heterodimer. The p62-E1 heterodimer is stable, whereas E2-E1 is unstable and dissociate at low pH. p62 is processed at the last step, presumably to avoid E1 fusion activation before its final export to cell surface. E2 C-terminus contains a transitory transmembrane that would be disrupted by palmitoylation, resulting in reorientation of the C-terminal tail from lumenal to cytoplasmic side. This step is critical since E2 C-terminus is involved in budding by interacting with capsid proteins. This release of E2 C-terminus in cytoplasm occurs lately in protein export, and precludes premature assembly of particles at the endoplasmic reticulum membrane. Acts as a viroporin that participates in virus glycoprotein processing and transport to the plasma membrane, cell permeabilization and budding of viral particles. Disrupts the calcium homeostasis of the cell, probably at the endoplasmic reticulum level. This leads to cytoplasmic calcium elevation. Because of its lipophilic properties, the 6K protein is postulated to influence the selection of lipids that interact with the transmembrane domains of the glycoproteins, which, in turn, affects the deformability of the bilayer required for the extreme curvature that occurs as budding proceeds. Present in low amount in virions, about 3% compared to viral glycoproteins. In terms of biological role, class II viral fusion protein. Fusion activity is inactive as long as E1 is bound to E2 in mature virion. After virus attachment to target cell via host MXRA8 and endocytosis, acidification of the endosome induce dissociation of E1/E2 heterodimer and concomitant trimerization of the E1 subunits. This E1 trimer is fusion active, and promotes release of viral nucleocapsid in cytoplasm after endosome and viral membrane fusion. Efficient fusion requires the presence of cholesterol and sphingolipid in the target membrane. The polypeptide is Structural polyprotein (O'nyong-nyong virus (strain SG650) (ONNV)).